The following is a 277-amino-acid chain: Large ribosomal subunit protein uL2 (277 aa).

The segment at 222-258 is disordered; that stretch reads GSVMNPCDHPHGGGEGRSPIGRPSPVTPWGKPALGYK.

It belongs to the universal ribosomal protein uL2 family. Part of the 50S ribosomal subunit. Forms a bridge to the 30S subunit in the 70S ribosome.

One of the primary rRNA binding proteins. Required for association of the 30S and 50S subunits to form the 70S ribosome, for tRNA binding and peptide bond formation. It has been suggested to have peptidyltransferase activity; this is somewhat controversial. Makes several contacts with the 16S rRNA in the 70S ribosome. The polypeptide is Large ribosomal subunit protein uL2 (Clostridium perfringens (strain 13 / Type A)).